A 446-amino-acid chain; its full sequence is uncharacterized protein (446 aa).

4 helical membrane passes run 69 to 89 (FWLW…VTYL), 98 to 118 (FFLV…VWLA), 169 to 189 (HSLW…LLLV), and 247 to 267 (GLLV…AWVV).

It localises to the membrane. This is an uncharacterized protein from Neisseria meningitidis serogroup B (strain ATCC BAA-335 / MC58).